The chain runs to 224 residues: tRNA (guanine-N(7)-)-methyltransferase (224 aa).

E54, E79, and D129 together coordinate S-adenosyl-L-methionine. D129 is a catalytic residue. K133 and D165 together coordinate substrate.

The protein belongs to the class I-like SAM-binding methyltransferase superfamily. TrmB family.

The catalysed reaction is guanosine(46) in tRNA + S-adenosyl-L-methionine = N(7)-methylguanosine(46) in tRNA + S-adenosyl-L-homocysteine. It functions in the pathway tRNA modification; N(7)-methylguanine-tRNA biosynthesis. In terms of biological role, catalyzes the formation of N(7)-methylguanine at position 46 (m7G46) in tRNA. The polypeptide is tRNA (guanine-N(7)-)-methyltransferase (Chlamydia pneumoniae (Chlamydophila pneumoniae)).